Reading from the N-terminus, the 612-residue chain is MPAFRSRTSTHGRNMAGARGLWRATGVKDSDFGKPIIAIVNSFTQFVPGHVHLKDLGQLVAREVEAAGGIAKEFNTIAVDDGIAMGHDGMLYSLPSRELIADSVEYMVNAHCADAMVCISNCDKITPGMLMAAMRLNIPAVFVSGGPMEAGKVTLGDGRTVKMDLIDAMVAAADEKVSDDDLTRIEQAACPTCGSCSGMFTANSMNCLTEALGLSLPGNGSTLATHAYRKELFLEAGRRAVELCRRYYEQEDEGVLPRAIATKEAFENAMALDIAMGGSTNTVLHILAAAQEGGVDFTMDDIDALSRRVPCLCKVAPNKADVHIEDVHRAGGIMSILGELDRGGLLHRDTRTVHAPTLGAAIDQWDIGRSNAPEARELFLAAPGGVPTQVAFSQSSTWDTLDTDRETGVIRSVATPFSKDGGLAVLKGNLAPDGCIVKTAGVDESILVFAGPAKVFESQDAAVYGILNGGVQAGDVVVIRYEGPKGGPGMQEMLYPTSYLKSKGLGKACALITDGRFSGGTSGLSIGHASPEAASGGPIGLVREGDRIEIDIPNRTITLAVPEAELAARRAEQDAKGWKPAGPRKRKVSQALKVYAQFASSADKGAVRVLPE.

Aspartate 81 provides a ligand contact to Mg(2+). Cysteine 122 serves as a coordination point for [2Fe-2S] cluster. Residues aspartate 123 and lysine 124 each contribute to the Mg(2+) site. Lysine 124 bears the N6-carboxylysine mark. Residue cysteine 196 coordinates [2Fe-2S] cluster. Glutamate 492 provides a ligand contact to Mg(2+). Serine 518 acts as the Proton acceptor in catalysis.

This sequence belongs to the IlvD/Edd family. As to quaternary structure, homodimer. [2Fe-2S] cluster serves as cofactor. Requires Mg(2+) as cofactor.

It carries out the reaction (2R)-2,3-dihydroxy-3-methylbutanoate = 3-methyl-2-oxobutanoate + H2O. It catalyses the reaction (2R,3R)-2,3-dihydroxy-3-methylpentanoate = (S)-3-methyl-2-oxopentanoate + H2O. It functions in the pathway amino-acid biosynthesis; L-isoleucine biosynthesis; L-isoleucine from 2-oxobutanoate: step 3/4. It participates in amino-acid biosynthesis; L-valine biosynthesis; L-valine from pyruvate: step 3/4. Functions in the biosynthesis of branched-chain amino acids. Catalyzes the dehydration of (2R,3R)-2,3-dihydroxy-3-methylpentanoate (2,3-dihydroxy-3-methylvalerate) into 2-oxo-3-methylpentanoate (2-oxo-3-methylvalerate) and of (2R)-2,3-dihydroxy-3-methylbutanoate (2,3-dihydroxyisovalerate) into 2-oxo-3-methylbutanoate (2-oxoisovalerate), the penultimate precursor to L-isoleucine and L-valine, respectively. This is Dihydroxy-acid dehydratase from Cereibacter sphaeroides (strain ATCC 17029 / ATH 2.4.9) (Rhodobacter sphaeroides).